The chain runs to 122 residues: Flagellar protein FliT (122 aa).

The interval 1–50 (MTSTVEFINRWQRIALLSQSLLELAQRGEWDLLLQQEVSYLQRIETVMEK) is required for homodimerization. The interval 60-98 (IQDMVAGYIKQTLDNEQLLKGLLQQRLDELSSLIGQSTR) is fliD binding.

This sequence belongs to the FliT family. As to quaternary structure, homodimer. Interacts with FliD and FlhC.

It is found in the cytoplasm. The protein localises to the cytosol. Functionally, dual-function protein that regulates the transcription of class 2 flagellar operons and that also acts as an export chaperone for the filament-capping protein FliD. As a transcriptional regulator, acts as an anti-FlhDC factor; it directly binds FlhC, thus inhibiting the binding of the FlhC/FlhD complex to class 2 promoters, resulting in decreased expression of class 2 flagellar operons. As a chaperone, effects FliD transition to the membrane by preventing its premature polymerization, and by directing it to the export apparatus. This chain is Flagellar protein FliT, found in Salmonella paratyphi A (strain AKU_12601).